A 480-amino-acid chain; its full sequence is Glutamate--tRNA ligase (480 aa).

The short motif at 21–31 (PSPTGYLHVGG) is the 'HIGH' region element. Residues Cys110, Cys112, Cys137, and His139 each coordinate Zn(2+). Residues 248–252 (KLSKR) carry the 'KMSKS' region motif. Lys251 contacts ATP.

This sequence belongs to the class-I aminoacyl-tRNA synthetase family. Glutamate--tRNA ligase type 1 subfamily. As to quaternary structure, monomer. Requires Zn(2+) as cofactor.

Its subcellular location is the cytoplasm. The enzyme catalyses tRNA(Glu) + L-glutamate + ATP = L-glutamyl-tRNA(Glu) + AMP + diphosphate. Catalyzes the attachment of glutamate to tRNA(Glu) in a two-step reaction: glutamate is first activated by ATP to form Glu-AMP and then transferred to the acceptor end of tRNA(Glu). The polypeptide is Glutamate--tRNA ligase (Actinobacillus succinogenes (strain ATCC 55618 / DSM 22257 / CCUG 43843 / 130Z)).